We begin with the raw amino-acid sequence, 62 residues long: DNA gyrase inhibitor YacG (62 aa).

Residues C9, C12, C27, and C31 each coordinate Zn(2+). Residues 43–52 (GYRIPGEKAP) show a composition bias toward basic and acidic residues. Positions 43–62 (GYRIPGEKAPESGGEEPGDE) are disordered.

It belongs to the DNA gyrase inhibitor YacG family. Interacts with GyrB. The cofactor is Zn(2+).

Functionally, inhibits all the catalytic activities of DNA gyrase by preventing its interaction with DNA. Acts by binding directly to the C-terminal domain of GyrB, which probably disrupts DNA binding by the gyrase. The sequence is that of DNA gyrase inhibitor YacG from Geobacter sp. (strain M21).